Consider the following 132-residue polypeptide: Small ribosomal subunit protein uS8 (132 aa).

This sequence belongs to the universal ribosomal protein uS8 family. Part of the 30S ribosomal subunit. Contacts proteins S5 and S12.

Its function is as follows. One of the primary rRNA binding proteins, it binds directly to 16S rRNA central domain where it helps coordinate assembly of the platform of the 30S subunit. This is Small ribosomal subunit protein uS8 from Bifidobacterium animalis subsp. lactis (strain AD011).